Here is a 480-residue protein sequence, read N- to C-terminus: MVKICCIGAGYVGGPTMAVIALKCPAIEVVVVDISKPRVDAWNSDQLPIYEPGLDEVVKECRGRNLFFSTDVEKHVAEADIIFVSVNTPTKTRGLGAGKAADLTYWESAARMIADVSKSDKIVVEKSTVPVKTAEAIEKILTHNSKGINYQILSNPEFLAEGTAIEDLFKPDRVLIGGRETPEGKKAVQALKEVYAHWVPEDRIITTNLWSAELSKLAANAFLAQRISSVNAISALCEATGANVSEVAYAVGKDTRIGPKFLNASVGFGGSCFQKDILNLVYICECNGLPEVANYWKQVIKINDYQKSRFVNRVVASMFNTVSGKKIAVLGFAFKKDTGDTRETPAIDVCHGLLGDKAQISIYDPQVTEDQIQRDLSMAKFDWDHPRHLQPTSPTAFKQVSVVWDAYEATKGAHGLCILTEWDEFKTLDYQRIFDNMQKPAFVFDGRNVVDPEKLREIGFIVYSIGKPLDAWLKDMPAVA.

Residues Gly-8 to Gly-13, Asp-33, Arg-38, Val-86 to Thr-90, Ser-127 to Thr-128, and Glu-161 each bind NAD(+). Residues Glu-157–Glu-161, Lys-216–Leu-223, and Arg-256–Gly-269 each bind substrate. The active-site Nucleophile is the Cys-272. Cys-272 to Lys-275 contacts NAD(+). A substrate-binding site is contributed by Phe-334–Lys-335. NAD(+) is bound at residue Arg-342. Ser-393 carries the phosphoserine modification. A substrate-binding site is contributed by Arg-447.

This sequence belongs to the UDP-glucose/GDP-mannose dehydrogenase family.

The catalysed reaction is UDP-alpha-D-glucose + 2 NAD(+) + H2O = UDP-alpha-D-glucuronate + 2 NADH + 3 H(+). It participates in nucleotide-sugar biosynthesis; UDP-alpha-D-glucuronate biosynthesis; UDP-alpha-D-glucuronate from UDP-alpha-D-glucose: step 1/1. Involved in the biosynthesis of UDP-glucuronic acid (UDP-GlcA), providing nucleotide sugars for cell-wall polymers. In Oryza sativa subsp. japonica (Rice), this protein is UDP-glucose 6-dehydrogenase 5 (UGD5).